The sequence spans 391 residues: Sister chromatid cohesion protein DCC1 (391 aa).

The protein belongs to the DCC1 family. In terms of assembly, component of the ctf18-RFC complex which consists of ctf18, ctf8, dscc1 and the RFC complex.

The protein localises to the nucleus. Loads pcna onto primed templates regulating velocity, spacing and restart activity of replication forks. May couple DNA replication to sister chromatid cohesion. This chain is Sister chromatid cohesion protein DCC1 (dscc1), found in Danio rerio (Zebrafish).